The chain runs to 109 residues: uncharacterized protein (109 aa).

The helical transmembrane segment at 12 to 32 (PNILIKGVYIFVLYGMCICIV) threads the bilayer.

The protein localises to the membrane. This is an uncharacterized protein from Saccharomyces cerevisiae (strain ATCC 204508 / S288c) (Baker's yeast).